The following is a 353-amino-acid chain: Chorismate synthase (353 aa).

Positions 48 and 54 each coordinate NADP(+). FMN is bound by residues 125–127, 238–239, Gly278, 293–297, and Arg319; these read RSS, NA, and KPTSS.

This sequence belongs to the chorismate synthase family. Homotetramer. It depends on FMNH2 as a cofactor.

The enzyme catalyses 5-O-(1-carboxyvinyl)-3-phosphoshikimate = chorismate + phosphate. Its pathway is metabolic intermediate biosynthesis; chorismate biosynthesis; chorismate from D-erythrose 4-phosphate and phosphoenolpyruvate: step 7/7. Its function is as follows. Catalyzes the anti-1,4-elimination of the C-3 phosphate and the C-6 proR hydrogen from 5-enolpyruvylshikimate-3-phosphate (EPSP) to yield chorismate, which is the branch point compound that serves as the starting substrate for the three terminal pathways of aromatic amino acid biosynthesis. This reaction introduces a second double bond into the aromatic ring system. The protein is Chorismate synthase of Bordetella parapertussis (strain 12822 / ATCC BAA-587 / NCTC 13253).